Consider the following 333-residue polypeptide: L-lactate dehydrogenase A chain (333 aa).

Residues 30-58 and Arg-100 each bind NAD(+); that span reads GAVG…IEDK. The substrate site is built by Arg-107, Asn-139, and Arg-170. Asn-139 is an NAD(+) binding site. His-194 functions as the Proton acceptor in the catalytic mechanism. Thr-249 contacts substrate.

It belongs to the LDH/MDH superfamily. LDH family. As to quaternary structure, homotetramer.

Its subcellular location is the cytoplasm. It carries out the reaction (S)-lactate + NAD(+) = pyruvate + NADH + H(+). The protein operates within fermentation; pyruvate fermentation to lactate; (S)-lactate from pyruvate: step 1/1. Its function is as follows. Interconverts simultaneously and stereospecifically pyruvate and lactate with concomitant interconversion of NADH and NAD(+). The protein is L-lactate dehydrogenase A chain (LDHA) of Ambystoma mexicanum (Axolotl).